Reading from the N-terminus, the 104-residue chain is uncharacterized protein (104 aa).

The N-terminal stretch at 1–18 (MGVEGMWNVFLFSLQVAA) is a signal peptide. Asparagine 27 carries an N-linked (GlcNAc...) asparagine; by host glycan.

This is an uncharacterized protein from Fowl adenovirus A serotype 1 (strain CELO / Phelps) (FAdV-1).